The sequence spans 817 residues: Dolichyl-phosphate-mannose--protein mannosyltransferase 1 (817 aa).

Position 2 is an N-acetylserine (Ser2). The Cytoplasmic segment spans residues 2–50; sequence SEEKTYKRVEQDDPVPELDIKQGPVRPFIVTDPSAELASLRTMVTLKEK. A helical transmembrane segment spans residues 51-70; sequence LLVACLAVFTAVIRLHGLAW. The Lumenal portion of the chain corresponds to 71-135; the sequence is PDSVVFDEVH…DSFPSTTPYV (65 aa). A helical membrane pass occupies residues 136–154; the sequence is LMRFFSASLGALTVILMYM. At 155–179 the chain is on the cytoplasmic side; that stretch reads TLRYSGVRMWVALMSAICFAVENSY. Residues 180-200 form a helical membrane-spanning segment; the sequence is VTISRYILLDAPLMFFIAAAV. The Lumenal portion of the chain corresponds to 201–234; sequence YSFKKYEMYPANSLNAYKSLLATGIALGMASSSK. Residues 235-259 form a helical membrane-spanning segment; sequence WVGLFTVTWVGLLCIWRLWFMIGDL. Residues 260 to 273 are Cytoplasmic-facing; the sequence is TKSSKSIFKVAFAK. Residues 274–291 traverse the membrane as a helical segment; it reads LAFLLGVPFALYLVFFYI. Topologically, residues 292–584 are lumenal; sequence HFQSLTLDGD…GENNRNVYLL (293 aa). 3 consecutive MIR domains span residues 324-378, 388-448, and 459-514; these read VADV…LELY, FQNL…VEID, and ERVI…VENN. N-linked (GlcNAc...) asparagine glycosylation is found at Asn390 and Asn513. A helical transmembrane segment spans residues 585–605; sequence GNAIVWWAVTAFIGIFGLIVI. Topologically, residues 606 to 685 are cytoplasmic; it reads TELFSWQLGK…SYVFRSKRQM (80 aa). A helical membrane pass occupies residues 686-710; it reads GYAVVITFLAASVYFFKSFSPIIYG. The Lumenal segment spans residues 711–817; the sequence is TPWTQELCQK…LKVEKRAVLE (107 aa). N-linked (GlcNAc...) asparagine glycosylation is present at Asn743.

The protein belongs to the glycosyltransferase 39 family. PMT1 and PMT2 form a functional heterodimer. The complex interacts with endoplasmic reticulum proteins EMP24, ERV25, ERP1, ERP2, CDC48, HRD1, USA1, YOS9, ERO1, PDI1, UBR1, Cue4, DFM1 and TED1. Forms also a minor complex with PMT3.

It is found in the endoplasmic reticulum membrane. It carries out the reaction a di-trans,poly-cis-dolichyl beta-D-mannosyl phosphate + L-seryl-[protein] = 3-O-(alpha-D-mannosyl)-L-seryl-[protein] + a di-trans,poly-cis-dolichyl phosphate + H(+). The enzyme catalyses a di-trans,poly-cis-dolichyl beta-D-mannosyl phosphate + L-threonyl-[protein] = 3-O-(alpha-D-mannosyl)-L-threonyl-[protein] + a di-trans,poly-cis-dolichyl phosphate + H(+). It functions in the pathway protein modification; protein glycosylation. In terms of biological role, protein O-mannosyltransferase involved in O-glycosylation which is essential for cell wall rigidity. Forms a heterodimeric complex with PMT2 and more rarely with PMT3 to transfer mannose from Dol-P-mannose to Ser or Thr residues on proteins. The PMT1-PMT2 complex participates in oxidative protein folding, ER-associated protein degradation (ERAD), as well as ER export. Required for incorporation of proteins in the cell wall. This Saccharomyces cerevisiae (strain ATCC 204508 / S288c) (Baker's yeast) protein is Dolichyl-phosphate-mannose--protein mannosyltransferase 1.